The following is a 618-amino-acid chain: uncharacterized protein (618 aa).

The first 29 residues, 1–29, serve as a signal peptide directing secretion; that stretch reads MSFLVLPPEVNSALMFAGAGSGPTLAAAA. The tract at residues 598-618 is disordered; it reads SGDNSSGGFNAGNDQSGFFDG.

It belongs to the mycobacterial PPE family.

This is an uncharacterized protein from Mycobacterium tuberculosis (strain ATCC 25618 / H37Rv).